The following is a 317-amino-acid chain: UDP-3-O-acylglucosamine N-acyltransferase (317 aa).

The active-site Proton acceptor is the His229.

The protein belongs to the transferase hexapeptide repeat family. LpxD subfamily. As to quaternary structure, homotrimer.

The enzyme catalyses a UDP-3-O-[(3R)-3-hydroxyacyl]-alpha-D-glucosamine + a (3R)-hydroxyacyl-[ACP] = a UDP-2-N,3-O-bis[(3R)-3-hydroxyacyl]-alpha-D-glucosamine + holo-[ACP] + H(+). Its pathway is bacterial outer membrane biogenesis; LPS lipid A biosynthesis. Catalyzes the N-acylation of UDP-3-O-acylglucosamine using 3-hydroxyacyl-ACP as the acyl donor. Is involved in the biosynthesis of lipid A, a phosphorylated glycolipid that anchors the lipopolysaccharide to the outer membrane of the cell. In Campylobacter concisus (strain 13826), this protein is UDP-3-O-acylglucosamine N-acyltransferase.